The primary structure comprises 534 residues: Cytochrome P450 714B1 (534 aa).

Met1 is a topological domain (lumenal). Residues 2-22 (VVVVAAAMAAASLCCGVAAYL) traverse the membrane as a helical; Signal-anchor for type III membrane protein segment. The Cytoplasmic portion of the chain corresponds to 23-534 (YYVLWLAPER…RSKCDWAGFD (512 aa)). Cys472 serves as a coordination point for heme.

Belongs to the cytochrome P450 family. The cofactor is heme. Highly expressed in spikelet and uppermost internode. Detected in shoots, roots, leaves and anthers.

The protein localises to the membrane. Its function is as follows. Catalyzes the 13-hydroxylation of gibberellins (GAs). Determines the ratio of GA4 and GA1. Converts GA12 into GA53. In Oryza sativa subsp. japonica (Rice), this protein is Cytochrome P450 714B1 (CYP714B1).